Consider the following 570-residue polypeptide: Protein HEATR9 (570 aa).

The chain is Protein HEATR9 (HEATR9) from Homo sapiens (Human).